We begin with the raw amino-acid sequence, 394 residues long: MGCLGNSKTEDQRNEEKAQREANKKIEKQLQKDKQVYRATHRLLLLGAGESGKSTIVKQMRILHVNGFNGEGGEEDPQAARSNSDGEKATKVQDIKNNLKEAIETIVAAMSNLVPPVELANPENQFRVDYILSVMNVPNFDFPPEFYEHAKALWEDEGVRACYERSNEYQLIDCAQYFLDKIDVIKQADYVPSDQDLLRCRVLTSGIFETKFQVDKVNFHMFDVGGQRDERRKWIQCFNDVTAIIFVVASSSYNMVIREDNQTNRLQEALNLFKSIWNNRWLRTISVILFLNKQDLLAEKVLAGKSKIEDYFPEFARYTTPEDATPEPGEDPRVTRAKYFIRDEFLRISTASGDGRHYCYPHFTCAVDTENIRRVFNDCRDIIQRMHLRQYELL.

The disordered stretch occupies residues 1 to 23 (MGCLGNSKTEDQRNEEKAQREAN). Residue Gly2 is the site of N-palmitoyl glycine attachment. Cys3 is lipidated: S-palmitoyl cysteine. Over residues 8–23 (KTEDQRNEEKAQREAN) the composition is skewed to basic and acidic residues. The G-alpha domain occupies 39–394 (ATHRLLLLGA…RMHLRQYELL (356 aa)). The segment at 42–55 (RLLLLGAGESGKST) is G1 motif. 47–55 (GAGESGKST) is a GTP binding site. Position 54 (Ser54) interacts with Mg(2+). The tract at residues 68–90 (FNGEGGEEDPQAARSNSDGEKAT) is disordered. The interval 196 to 204 (DLLRCRVLT) is G2 motif. GTP-binding positions include 197–204 (LLRCRVLT), 223–227 (DVGGQ), and 292–295 (NKQD). Thr204 lines the Mg(2+) pocket. The segment at 219-228 (FHMFDVGGQR) is G3 motif. Residues 288-295 (ILFLNKQD) form a G4 motif region. A Glycyl lysine isopeptide (Lys-Gly) (interchain with G-Cter in ubiquitin) cross-link involves residue Lys300. Residue Ser352 is modified to Phosphoserine. The tract at residues 364–369 (TCAVDT) is G5 motif. Position 366 (Ala366) interacts with GTP.

This sequence belongs to the G-alpha family. G(s) subfamily. In terms of assembly, heterotrimeric G proteins are composed of 3 units; alpha, beta and gamma. The alpha chain contains the guanine nucleotide binding site. Component of the TAS2R14-GNAS2 complex, consisting of TAS2R14, GNAS2, GNB1 and GNG2; within the complex interacts with TAS2R14; this complex plays a role in the perception of bitterness. Interacts with CRY1; the interaction may block GPCR-mediated regulation of cAMP concentrations. Interacts with ADCY6 and stimulates its adenylyl cyclase activity. Interacts with ADCY2 and ADCY5. Interacts (GDP-bound form) with RIC8B; promoting GNAS folding and association with the plasma membrane. Stimulates the ADCY5 adenylyl cyclase activity. Interaction with SASH1. Interacts with GASL2L2.

Its subcellular location is the cell membrane. The catalysed reaction is GTP + H2O = GDP + phosphate + H(+). Guanine nucleotide-binding proteins (G proteins) function as transducers in numerous signaling pathways controlled by G protein-coupled receptors (GPCRs). The alpha chain contains the guanine nucleotide binding site and alternates between an active, GTP-bound state and an inactive, GDP-bound state. Signaling by an activated GPCR promotes GDP release and GTP binding. The alpha subunit has a low GTPase activity that converts bound GTP to GDP, thereby terminating the signal. Both GDP release and GTP hydrolysis are modulated by numerous regulatory proteins. Signaling involves the activation of adenylyl cyclases, resulting in increased levels of the signaling molecule cAMP. Functions downstream of beta-adrenergic receptors. Stimulates the Ras signaling pathway via RAPGEF2. In Mus musculus (Mouse), this protein is Guanine nucleotide-binding protein G(s) subunit alpha isoforms short (Gnas).